Consider the following 65-residue polypeptide: Metallothionein-like protein type 3 (65 aa).

It belongs to the metallothionein superfamily. Type 15 family.

Metallothioneins have a high content of cysteine residues that bind various heavy metals. The chain is Metallothionein-like protein type 3 from Carica papaya (Papaya).